A 612-amino-acid chain; its full sequence is Dihydroxy-acid dehydratase (612 aa).

D81 provides a ligand contact to Mg(2+). Residue C122 coordinates [2Fe-2S] cluster. D123 and K124 together coordinate Mg(2+). N6-carboxylysine is present on K124. C193 contributes to the [2Fe-2S] cluster binding site. Position 489 (E489) interacts with Mg(2+). The active-site Proton acceptor is the S515.

This sequence belongs to the IlvD/Edd family. Homodimer. [2Fe-2S] cluster serves as cofactor. It depends on Mg(2+) as a cofactor.

The enzyme catalyses (2R)-2,3-dihydroxy-3-methylbutanoate = 3-methyl-2-oxobutanoate + H2O. It carries out the reaction (2R,3R)-2,3-dihydroxy-3-methylpentanoate = (S)-3-methyl-2-oxopentanoate + H2O. It functions in the pathway amino-acid biosynthesis; L-isoleucine biosynthesis; L-isoleucine from 2-oxobutanoate: step 3/4. Its pathway is amino-acid biosynthesis; L-valine biosynthesis; L-valine from pyruvate: step 3/4. Its function is as follows. Functions in the biosynthesis of branched-chain amino acids. Catalyzes the dehydration of (2R,3R)-2,3-dihydroxy-3-methylpentanoate (2,3-dihydroxy-3-methylvalerate) into 2-oxo-3-methylpentanoate (2-oxo-3-methylvalerate) and of (2R)-2,3-dihydroxy-3-methylbutanoate (2,3-dihydroxyisovalerate) into 2-oxo-3-methylbutanoate (2-oxoisovalerate), the penultimate precursor to L-isoleucine and L-valine, respectively. This is Dihydroxy-acid dehydratase from Xanthomonas axonopodis pv. citri (strain 306).